The chain runs to 137 residues: Small ribosomal subunit protein uS12 (137 aa).

The residue at position 102 (Asp102) is a 3-methylthioaspartic acid.

It belongs to the universal ribosomal protein uS12 family. Part of the 30S ribosomal subunit. Contacts proteins S8 and S17. May interact with IF1 in the 30S initiation complex.

With S4 and S5 plays an important role in translational accuracy. Functionally, interacts with and stabilizes bases of the 16S rRNA that are involved in tRNA selection in the A site and with the mRNA backbone. Located at the interface of the 30S and 50S subunits, it traverses the body of the 30S subunit contacting proteins on the other side and probably holding the rRNA structure together. The combined cluster of proteins S8, S12 and S17 appears to hold together the shoulder and platform of the 30S subunit. This chain is Small ribosomal subunit protein uS12, found in Mycoplasmopsis agalactiae (strain NCTC 10123 / CIP 59.7 / PG2) (Mycoplasma agalactiae).